A 1186-amino-acid chain; its full sequence is Atrophin-1 (1186 aa).

Disordered stretches follow at residues 1 to 604 (MKTR…PTVT), 618 to 763 (ASSP…ARFN), and 781 to 858 (VPLE…HRPP). A Nuclear localization signal motif is present at residues 16-32 (RKKEAPGPREELRSRGR). Residues 17 to 29 (KKEAPGPREELRS) are compositionally biased toward basic and acidic residues. Position 34 is a phosphoserine (Ser34). The span at 45 to 63 (GKAEKSRQTAKKARVEEAS) shows a compositional bias: basic and acidic residues. Residues Ser77, Ser79, Ser100, Ser102, and Ser106 each carry the phosphoserine modification. Over residues 107–127 (LDGRSLNDDGSSDPRDIDQDN) the composition is skewed to basic and acidic residues. Over residues 128-151 (RSTSPSIYSPGSVENDSDSSSGLS) the composition is skewed to polar residues. Residues 157–173 (PYHPPPLFPPSPQPPDS) show a composition bias toward pro residues. Low complexity-rich tracts occupy residues 258–270 (PISV…SGAP), 349–365 (PTLA…SSSA), and 375–396 (SSSS…SSAS). Positions 416–437 (SLSVSNQPPKYTQPSLPSQAVW) are enriched in polar residues. The span at 484–503 (QQQQQQQQQQQQQQQHHGNS) shows a compositional bias: low complexity. Residues 513–563 (HPLEGGSSHHAHPYAMSPSLGSLRPYPPGPAHLPPPHSQVSYSQAGPNGPP) form an involved in binding BAIAP2 region. Over residues 537–549 (PYPPGPAHLPPPH) the composition is skewed to pro residues. 2 stretches are compositionally biased toward low complexity: residues 565–582 (SSSS…YPCS) and 618–628 (ASSPAGYKTAS). Ser628 is subject to Phosphoserine. Lys637 carries the post-translational modification N6-acetyllysine. Thr649 carries the post-translational modification Phosphothreonine. Ser657 is subject to Phosphoserine. Thr665 carries the phosphothreonine modification. 2 stretches are compositionally biased toward pro residues: residues 689–714 (GPGP…PASG) and 735–748 (SPVP…PPPK). Ser735 carries the post-translational modification Phosphoserine; by MAPK8. A phosphoserine mark is found at Ser742 and Ser744. Residues 791-835 (KRADLVEKVRREAEQRAREEKEREREREREKEREREKERELERSV) are compositionally biased toward basic and acidic residues. The interval 875–890 (DTPALRTLSEYARPHV) is required for interaction with FAT1. Ser892 is modified (phosphoserine). The Nuclear export signal signature appears at 1029–1037 (ALGNDPLAR). Residue Arg1111 is modified to Asymmetric dimethylarginine. Lys1179 participates in a covalent cross-link: Glycyl lysine isopeptide (Lys-Gly) (interchain with G-Cter in SUMO2).

As to quaternary structure, interacts with NR2E1; the interaction represses the transcriptional activity of NR2E1. Interacts with BAIAP2, WWP1, WWP2, WWP3 and RERE. Interacts (via its N-terminus) with MTG8; the interaction enhances transcriptional repression of MTG8. Interacts with FAT1 (via a C-terminal domain). Interacts with PQBP1. In terms of processing, phosphorylated in vitro by MAPK8/JNK1 on Ser-735.

Its subcellular location is the nucleus. The protein localises to the cytoplasm. The protein resides in the perinuclear region. It is found in the cell junction. Transcriptional corepressor. Corepressor of MTG8 transcriptional repression. Recruits NR2E1 to repress transcription. Has some intrinsic repression activity. Promotes vascular smooth cell (VSMC) migration and orientation. This chain is Atrophin-1 (ATN1), found in Pan troglodytes (Chimpanzee).